The chain runs to 173 residues: RNA pyrophosphohydrolase (173 aa).

Residues 13 to 166 (PYRPCVGLMI…KRKVYEEVVA (154 aa)) enclose the Nudix hydrolase domain. The short motif at 54–75 (GGIDKGEEPLQAAERELYEETG) is the Nudix box element.

The protein belongs to the Nudix hydrolase family. RppH subfamily. A divalent metal cation is required as a cofactor.

Accelerates the degradation of transcripts by removing pyrophosphate from the 5'-end of triphosphorylated RNA, leading to a more labile monophosphorylated state that can stimulate subsequent ribonuclease cleavage. The protein is RNA pyrophosphohydrolase of Mesorhizobium japonicum (strain LMG 29417 / CECT 9101 / MAFF 303099) (Mesorhizobium loti (strain MAFF 303099)).